A 255-amino-acid polypeptide reads, in one-letter code: 1-(5-phosphoribosyl)-5-[(5-phosphoribosylamino)methylideneamino] imidazole-4-carboxamide isomerase (255 aa).

Catalysis depends on D8, which acts as the Proton acceptor. The Proton donor role is filled by D129.

Belongs to the HisA/HisF family.

Its subcellular location is the cytoplasm. It catalyses the reaction 1-(5-phospho-beta-D-ribosyl)-5-[(5-phospho-beta-D-ribosylamino)methylideneamino]imidazole-4-carboxamide = 5-[(5-phospho-1-deoxy-D-ribulos-1-ylimino)methylamino]-1-(5-phospho-beta-D-ribosyl)imidazole-4-carboxamide. Its pathway is amino-acid biosynthesis; L-histidine biosynthesis; L-histidine from 5-phospho-alpha-D-ribose 1-diphosphate: step 4/9. This chain is 1-(5-phosphoribosyl)-5-[(5-phosphoribosylamino)methylideneamino] imidazole-4-carboxamide isomerase, found in Synechococcus sp. (strain CC9605).